Here is an 860-residue protein sequence, read N- to C-terminus: MSGMKRRYDYEEEDGYRDFRPRYSKRQRLPPVVQLCKDMLPDIRTIGESVKAFEEDIKFLSEAIINEFGNDEYFNNALLSTFNALILEQPHKQPAIALLTIVVNSGNPAAGKSVINYFYEKLQHLLDMTVVDDFEVTSNETGPWNKIKLTLRFLSLLSPVITLTELTNVYQRLFELAVQLNRSSDANTRNPLSEAIYTNTLLNIPYLFFFNKEDETLRTNVEDLIQYAESNYEVKTVDLSLTKEYNKNLPYEPVQWVQIVLSNVKNALANDMEELKNLFPDYQNLLPTSIEQQMFNDPLTIPEFEKLLPFSGLDKGLGSVDSMWKTPRTAFQVYLPNVVGDFSTVVPITTYTGMLFDDIIVDIVESLEFNRHEVARQVVTLDLYFKPGIFTEPGLSIAQLLVQHNEMPELSTYKIEDLAIENILGLIFKLPTVTQSFAYFYTLLVEICQNSPKAIAPVFGRAFRLFYNNLDNMDHELKMRYLDWFSIQMSNFNFSWKWNEWEQDSIAFSKSFYNPKITFAKNLIRKELRLTSNRPDVEDSLTPEFKQYLDASYISKDQLASYYQSFFEGFSFDPEVIKDNDLLFKNEVFPFHEKVQLILDYIHKQPLEKNISELESLLEDIKSAHGDKIPDFNRFTVTLLIQALVYSGNRSLSHANKYISDAKSDLVTILEKMEVPPEVKEQWIIEAVIRYWNCNSQNGFLIVDSFKHSELVTAKSILTFSLTDLNGQNLGLVDATSIESTFRTLTELALQQASDISVFEFVFERLLEIINDTVSQLGTNEEIVAPSVDNETMLDVDELARLDLIWKYESAVGFIKSILRKYSDEYSVLLDKFSAGLEQAVPHEPTRKQLDQWFNEIREL.

An MIF4G domain is found at 36–271 (CKDMLPDIRT…SNVKNALAND (236 aa)).

Belongs to the NCBP1 family. Component of the nuclear cap-binding complex (CBC).

It localises to the nucleus. In terms of biological role, component of the cap-binding complex (CBC) involved in the nuclear export of capped U snRNAs. The CBC complex is required for efficient pre-mRNA splicing through efficient commitment complex and spliceosome formation; and involved in rRNA processing at sites A0, A1 and A2. In Eremothecium gossypii (strain ATCC 10895 / CBS 109.51 / FGSC 9923 / NRRL Y-1056) (Yeast), this protein is Nuclear cap-binding protein complex subunit 1 (CBC1).